The chain runs to 142 residues: Large ribosomal subunit protein bL17 (142 aa).

The protein belongs to the bacterial ribosomal protein bL17 family. Part of the 50S ribosomal subunit. Contacts protein L32.

The sequence is that of Large ribosomal subunit protein bL17 from Wolbachia pipientis wMel.